The following is a 305-amino-acid chain: MRIVFMGTPGFAEVILRALIENQNNNIEVVGLFTQMDKPFGRKKELKAPETKTYILENHSNIPIFQPQSLKEPEVQILKGLKPDFIVVVAYGKILPKEVLKIAPCINVHASLLPKYRGASPVHEMILNDDTIYGVSAMLMDLELDSGDILGSASFLREGYLNLETLSLKLAHMGATLLLSTLKNFHSITPKPQDHASATFCKKITKADGLVGFKDAKSLFLKSLAFKTWPEIFLENNLKLLGVELVENEKSHREGEILRIDERGVLVGCLKGSVRIARLQAVGKKPLKAKDYLNGRRLKAGDILA.

111 to 114 is a (6S)-5,6,7,8-tetrahydrofolate binding site; sequence SLLP.

It belongs to the Fmt family.

The catalysed reaction is L-methionyl-tRNA(fMet) + (6R)-10-formyltetrahydrofolate = N-formyl-L-methionyl-tRNA(fMet) + (6S)-5,6,7,8-tetrahydrofolate + H(+). In terms of biological role, attaches a formyl group to the free amino group of methionyl-tRNA(fMet). The formyl group appears to play a dual role in the initiator identity of N-formylmethionyl-tRNA by promoting its recognition by IF2 and preventing the misappropriation of this tRNA by the elongation apparatus. In Helicobacter acinonychis (strain Sheeba), this protein is Methionyl-tRNA formyltransferase.